We begin with the raw amino-acid sequence, 333 residues long: uncharacterized protein (333 aa).

This is an uncharacterized protein from Mycolicibacterium smegmatis (Mycobacterium smegmatis).